The following is a 180-amino-acid chain: ATP-dependent protease subunit HslV (180 aa).

Residue T5 is part of the active site. Na(+) is bound by residues G161, C164, and T167.

The protein belongs to the peptidase T1B family. HslV subfamily. A double ring-shaped homohexamer of HslV is capped on each side by a ring-shaped HslU homohexamer. The assembly of the HslU/HslV complex is dependent on binding of ATP.

It is found in the cytoplasm. The enzyme catalyses ATP-dependent cleavage of peptide bonds with broad specificity.. With respect to regulation, allosterically activated by HslU binding. Protease subunit of a proteasome-like degradation complex believed to be a general protein degrading machinery. The sequence is that of ATP-dependent protease subunit HslV from Campylobacter jejuni subsp. doylei (strain ATCC BAA-1458 / RM4099 / 269.97).